Here is a 478-residue protein sequence, read N- to C-terminus: Uronate isomerase (478 aa).

It belongs to the metallo-dependent hydrolases superfamily. Uronate isomerase family.

It carries out the reaction D-glucuronate = D-fructuronate. It catalyses the reaction aldehydo-D-galacturonate = keto-D-tagaturonate. It functions in the pathway carbohydrate metabolism; pentose and glucuronate interconversion. The polypeptide is Uronate isomerase (Bacillus pumilus (strain SAFR-032)).